Reading from the N-terminus, the 406-residue chain is 5-hydroxytryptamine receptor 4 (406 aa).

The Extracellular segment spans residues 1-19 (MDRLDANVSSNEGFGSVEK). Asn7 carries N-linked (GlcNAc...) asparagine glycosylation. The chain crosses the membrane as a helical span at residues 20–44 (VVLLTFFAMVILMAILGNLLVMVAV). At 45–54 (CRDRQLRKIK) the chain is on the cytoplasmic side. The chain crosses the membrane as a helical span at residues 55 to 78 (TNYFIVSLAFADLLVSVLVNAFGA). Topologically, residues 79–92 (IELVQDIWFYGEMF) are extracellular. The helical transmembrane segment at 93-117 (CLVRTSLDVLLTTASIFHLCCISLD) threads the bilayer. Residues Cys93 and Cys184 are joined by a disulfide bond. Asp100 is a serotonin binding site. The Cytoplasmic segment spans residues 118–133 (RYYAICCQPLVYRNKM). Residues 134–157 (TPLRIALMLGGCWVIPMFISFLPI) form a helical membrane-spanning segment. Over 158–188 (MQGWNNIGIVDVIEKRKFNHNSNSTFCVFMV) the chain is Extracellular. A helical transmembrane segment spans residues 189 to 212 (NKPYAITCSVVAFYIPFLLMVLAY). The Cytoplasmic portion of the chain corresponds to 213–257 (YRIYVTAKEHAQQIQMLQRAGATSESRPQTADQHSTHRMRTETKA). A helical membrane pass occupies residues 258-283 (AKTLCVIMGCFCFCWAPFFVTNIVDP). Asn279 is a serotonin binding site. Residues 284–290 (FIDYTVP) lie on the Extracellular side of the membrane. A helical transmembrane segment spans residues 291–314 (EKVWTAFLWLGYINSGLNPFLYAF). Topologically, residues 315–406 (LNKSFRRAFL…DSCSLKRSQS (92 aa)) are cytoplasmic.

The protein belongs to the G-protein coupled receptor 1 family. Interacts (via C-terminus 330-346 AA) with GRK5; this interaction is promoted by 5-HT (serotonin). In brain, isoform 5-HT4S is restricted to the striatum. In peripheral tissues, differential expression is also observed in the atrium of the heart where only isoform 5-HT4S is detectable. As to expression, in brain, isoform 5-HT4L is expressed throughout the brain, except in the cerebellum.

The protein localises to the cell membrane. It localises to the endosome membrane. Functionally, G-protein coupled receptor for 5-hydroxytryptamine (serotonin), a biogenic hormone that functions as a neurotransmitter, a hormone and a mitogen. Ligand binding causes a conformation change that triggers signaling via guanine nucleotide-binding proteins (G proteins) and modulates the activity of downstream effectors. HTR4 is coupled to G(s) G alpha proteins and mediates activation of adenylate cyclase activity. The sequence is that of 5-hydroxytryptamine receptor 4 (Htr4) from Rattus norvegicus (Rat).